We begin with the raw amino-acid sequence, 199 residues long: Peptidyl-tRNA hydrolase (199 aa).

Residue tyrosine 15 coordinates tRNA. Catalysis depends on histidine 20, which acts as the Proton acceptor. TRNA is bound by residues tyrosine 66, asparagine 68, and asparagine 114.

Belongs to the PTH family. As to quaternary structure, monomer.

The protein localises to the cytoplasm. The catalysed reaction is an N-acyl-L-alpha-aminoacyl-tRNA + H2O = an N-acyl-L-amino acid + a tRNA + H(+). Hydrolyzes ribosome-free peptidyl-tRNAs (with 1 or more amino acids incorporated), which drop off the ribosome during protein synthesis, or as a result of ribosome stalling. In terms of biological role, catalyzes the release of premature peptidyl moieties from peptidyl-tRNA molecules trapped in stalled 50S ribosomal subunits, and thus maintains levels of free tRNAs and 50S ribosomes. This Burkholderia ambifaria (strain MC40-6) protein is Peptidyl-tRNA hydrolase.